A 350-amino-acid polypeptide reads, in one-letter code: GTPase Obg (350 aa).

In terms of domain architecture, Obg spans Met-1–Leu-159. The tract at residues Asn-127–Gly-147 is disordered. Residues Ala-160–Asp-337 enclose the OBG-type G domain. GTP contacts are provided by residues Gly-166–Ser-173, Phe-191–Tyr-195, Asp-213–Gly-216, Asn-287–Asp-290, and Ser-318–Leu-320. The Mg(2+) site is built by Ser-173 and Thr-193.

It belongs to the TRAFAC class OBG-HflX-like GTPase superfamily. OBG GTPase family. In terms of assembly, monomer. The cofactor is Mg(2+).

It is found in the cytoplasm. Functionally, an essential GTPase which binds GTP, GDP and possibly (p)ppGpp with moderate affinity, with high nucleotide exchange rates and a fairly low GTP hydrolysis rate. Plays a role in control of the cell cycle, stress response, ribosome biogenesis and in those bacteria that undergo differentiation, in morphogenesis control. In Stenotrophomonas maltophilia (strain R551-3), this protein is GTPase Obg.